Reading from the N-terminus, the 589-residue chain is MSGVSNKTVSINGWYGMPIHLLREEGDFAQFMILTINELKIAIHGYLRNTPWYNMLKDYLFVIFCYKLISNFFYLLKVYGPVRLAVRTYEHSSRRLFRWLLDSPFLRGTVEKEVTKVKQSIEDELIRSDSQLMNFPQLPSNGIPQDDVIEELNKLNDLIPHTQWKEGKVSGAVYHGGDDLIHLQTIAYEKYCVANQLHPDVFPAVRKMESEVVSMVLRMFNAPSDTGCGTTTSGGTESLLLACLSAKMYALHHRGITEPEIIAPVTAHAGFDKAAYYFGMKLRHVELDPTTYQVDLGKVKKFINKNTILLVGSAPNFPHGIADDIEGLGKIAQKYKLPLHVDSCLGSFIVSFMEKAGYKNLPLLDFRVPGVTSISCDTHKYGFAPKGSSVIMYRNSDLRMHQYYVNPAWTGGLYGSPTLAGSRPGAIVVGCWATMVNMGENGYIESCQEIVGAAMKFKKYIQENIPDLNIMGNPRYSVISFSSKTLNIHELSDRLSKKGWHFNALQKPVALHMAFTRLSAHVVDEICDILRTTVQELKSESNSKPSPDGTSALYGVAGSVKTAGVADKLIVGFLDALYKLGPGEDTATK.

Over 1-58 (MSGVSNKTVSINGWYGMPIHLLREEGDFAQFMILTINELKIAIHGYLRNTPWYNMLKD) the chain is Lumenal. N-linked (GlcNAc...) asparagine glycosylation occurs at Asn-6. The chain crosses the membrane as a helical span at residues 59-76 (YLFVIFCYKLISNFFYLL). Topologically, residues 77–589 (KVYGPVRLAV…LGPGEDTATK (513 aa)) are cytoplasmic. Position 380 is an N6-(pyridoxal phosphate)lysine (Lys-380).

Belongs to the group II decarboxylase family. Sphingosine-1-phosphate lyase subfamily. Homodimer. Pyridoxal 5'-phosphate is required as a cofactor. Post-translationally, glycosylated.

The protein localises to the endoplasmic reticulum membrane. It carries out the reaction sphinganine 1-phosphate = hexadecanal + phosphoethanolamine. The catalysed reaction is (4R)-hydroxysphinganine 1-phosphate = (2R)-hydroxyhexadecanal + phosphoethanolamine. It participates in lipid metabolism; sphingolipid metabolism. Its function is as follows. Sphingosine-1-phosphate lyase that cleaves phosphorylated sphingoid bases (PSBs), such as sphingosine-1-phosphate, into fatty aldehydes and phosphoethanolamine. Prefers C-16 dihydrosphingosine-l-phosphate (DHS-P) as a substrate. Regulates intracellular levels of sphingolipid long-chain base phosphates (LCBPs). Plays a role in the regulation of global responses to nutrient deprivation in yeast. The chain is Sphingosine-1-phosphate lyase from Saccharomyces cerevisiae (strain ATCC 204508 / S288c) (Baker's yeast).